We begin with the raw amino-acid sequence, 122 residues long: Large ribosomal subunit protein uL18 (122 aa).

Belongs to the universal ribosomal protein uL18 family. As to quaternary structure, part of the 50S ribosomal subunit; part of the 5S rRNA/L5/L18/L25 subcomplex. Contacts the 5S and 23S rRNAs.

This is one of the proteins that bind and probably mediate the attachment of the 5S RNA into the large ribosomal subunit, where it forms part of the central protuberance. This chain is Large ribosomal subunit protein uL18, found in Synechococcus sp. (strain JA-2-3B'a(2-13)) (Cyanobacteria bacterium Yellowstone B-Prime).